A 99-amino-acid chain; its full sequence is Integration host factor subunit alpha (99 aa).

A disordered region spans residues 49–72 (FGNFDLRDKNQRPGRNPKTGEDIP).

Belongs to the bacterial histone-like protein family. In terms of assembly, heterodimer of an alpha and a beta chain.

Its function is as follows. This protein is one of the two subunits of integration host factor, a specific DNA-binding protein that functions in genetic recombination as well as in transcriptional and translational control. The polypeptide is Integration host factor subunit alpha (Escherichia coli O9:H4 (strain HS)).